A 210-amino-acid chain; its full sequence is Isomeliandiol synthase ISM1 (210 aa).

Transmembrane regions (helical) follow at residues 17–37 (FTLH…TWFI), 50–70 (LLCW…YFVF), 107–127 (IEGM…YAIV), 135–155 (ILQF…FLTA), and 172–192 (YYVG…INFW). The EXPERA domain occupies 46–188 (GDRLLLCWWA…IWIIVPSLIA (143 aa)).

This sequence belongs to the EBP family.

Its subcellular location is the membrane. It carries out the reaction 7,8-epoxymelianol = isomeliandiol. It participates in secondary metabolite biosynthesis; terpenoid biosynthesis. Functionally, isomerase involved in the biosynthesis of limonoids and quassinoids triterpene natural products such as ailanthone, chaparrinone, glaucarubinone and amarolide, allelopathic degraded triterpene lactones inhibiting the growth of other plants, and possessing antimalarial, antifeedant, insecticidal, anti-inflammatory and anticancer activities. Catalyzes the conversion of 7,8-epoxymelianol to isomeliandiol via skeletal rearrangements. This is Isomeliandiol synthase ISM1 from Ailanthus altissima (Tree-of-heaven).